The sequence spans 87 residues: Small ribosomal subunit protein bS16 (87 aa).

Belongs to the bacterial ribosomal protein bS16 family.

In Onion yellows phytoplasma (strain OY-M), this protein is Small ribosomal subunit protein bS16.